Consider the following 287-residue polypeptide: MKNVLSIQSHVIYGHAGNSAAVFPMQRLGVNVWPLNTVQLSNHMQYGHWAGSAIDAAKMEQLVDGIAAIGALKRCDAVLSGFLGSPAQARAAVEIVRTVKATNPNAWYFCDPAMGQTGGIRPEPGVEEFIVAELPELADGMAPNHSELQKLAGQRIETVAEAVAACRSIIRRSPQVILVKHLHDRNSPADRFNMLVVTETEAWIGQRPLYAFPRHPVGVGDLTSAIFVARRLRGDSVRAAFEHTLAAVHAVVKATYDARRYELELVAAQDEIARPSEWFGAWVTGAD.

Substrate contacts are provided by residues Ser9 and 44–45 (MQ). 4 residues coordinate ATP: Asp111, Ala142, Glu147, and Lys180. Residue Asp221 participates in substrate binding.

This sequence belongs to the pyridoxine kinase family. PdxY subfamily. As to quaternary structure, homodimer. Requires Mg(2+) as cofactor.

The enzyme catalyses pyridoxal + ATP = pyridoxal 5'-phosphate + ADP + H(+). The protein operates within cofactor metabolism; pyridoxal 5'-phosphate salvage; pyridoxal 5'-phosphate from pyridoxal: step 1/1. Its function is as follows. Pyridoxal kinase involved in the salvage pathway of pyridoxal 5'-phosphate (PLP). Catalyzes the phosphorylation of pyridoxal to PLP. This is Pyridoxal kinase PdxY from Burkholderia mallei (strain ATCC 23344).